The following is a 408-amino-acid chain: Glyceraldehyde-3-phosphate dehydrogenase, testis-specific (408 aa).

The testis-specific N-terminal extension stretch occupies residues 1 to 73; that stretch reads MSKRDIVLTN…TPPPKMVSVA (73 aa). The segment at 19 to 68 is disordered; sequence QPCPVTRAPPPPEPKAEVEPQPQPEPTPVREEIKPPPPPLPPHPATPPPK. Pro residues predominate over residues 53–68; that stretch reads PPPPPLPPHPATPPPK. NAD(+) is bound by residues 85 to 86, aspartate 106, lysine 151, tyrosine 173, and serine 193; that span reads RI. Residues 223–225, threonine 254, 283–284, and arginine 306 contribute to the D-glyceraldehyde 3-phosphate site; these read SCT and TG. Cysteine 224 functions as the Nucleophile in the catalytic mechanism. Asparagine 388 provides a ligand contact to NAD(+).

This sequence belongs to the glyceraldehyde-3-phosphate dehydrogenase family. In terms of assembly, homotetramer. Interacts with ARRB2; the interaction is detected in the nucleus upon OR1D2 stimulation. As to expression, testis specific.

The protein resides in the cytoplasm. It catalyses the reaction D-glyceraldehyde 3-phosphate + phosphate + NAD(+) = (2R)-3-phospho-glyceroyl phosphate + NADH + H(+). It participates in carbohydrate degradation; glycolysis; pyruvate from D-glyceraldehyde 3-phosphate: step 1/5. Functionally, may play an important role in regulating the switch between different pathways for energy production during spermiogenesis and in the spermatozoon. Required for sperm motility and male fertility. This Homo sapiens (Human) protein is Glyceraldehyde-3-phosphate dehydrogenase, testis-specific (GAPDHS).